Reading from the N-terminus, the 358-residue chain is MSLDLKMQDKFTWVLEKFSSLKDQCYSPVFTVAGCNWRLLSFLKGAKNDRYFSVYLDLEPGSLPPGWRREVKFSITLDNVCPNTDRVLGGPCFFDAKSNIWGFQDFLLLEKLVNIAEGFLVNDRLTIVAEVDVLPSITRLHLVLEDASRGRDPNTVACVTETCDYVLMEIQSDKETVDINGFVVVSSKAESVRRILERHPDISVEFRGKNQQLRNACMNFLLSLIETMCQSLEELSNEDLVEADVALTYLRDAGFKVDWLEKKLDQLKEKKEEEMSGLARLHEIEERLQKLKLLFVDLESQLQKEKVEALVARAPLSFNDGVCRFSGFCGFVGESLFSYAWKQGPSLYSLSFMSNGTE.

The region spanning 8-131 (QDKFTWVLEK…NDRLTIVAEV (124 aa)) is the MATH domain. Residues 250-309 (LRDAGFKVDWLEKKLDQLKEKKEEEMSGLARLHEIEERLQKLKLLFVDLESQLQKEKVEA) adopt a coiled-coil conformation.

This Arabidopsis thaliana (Mouse-ear cress) protein is MATH domain and coiled-coil domain-containing protein At3g58440.